A 1073-amino-acid chain; its full sequence is PX domain-containing protein LEC1 (1073 aa).

Positions 218 to 228 (CTESVDNDKSS) are enriched in basic and acidic residues. A disordered region spans residues 218 to 240 (CTESVDNDKSSKSTPTSSPKSHA). Low complexity predominate over residues 229–238 (KSTPTSSPKS). The region spanning 273 to 506 (LFSKLSLGVP…RFFLSGPNLD (234 aa)) is the PX domain. Phosphoserine is present on residues S310 and S451. Residues 431–456 (IKEEDNIDEDEYEEEGEGEESDFDEY) are disordered. The segment covering 432 to 453 (KEEDNIDEDEYEEEGEGEESDF) has biased composition (acidic residues).

Its subcellular location is the endoplasmic reticulum membrane. It is found in the lipid droplet. Its function is as follows. Phosphoinositide-binding protein that plays a role in regulation of ergosterol distribution in the cell. Facilitates ergosterol transport between plasma membrane and lipid droplets. The protein is PX domain-containing protein LEC1 of Saccharomyces cerevisiae (strain ATCC 204508 / S288c) (Baker's yeast).